We begin with the raw amino-acid sequence, 84 residues long: Phosphoribosylformylglycinamidine synthase subunit PurS (84 aa).

This sequence belongs to the PurS family. As to quaternary structure, homodimer. Part of the FGAM synthase complex composed of 1 PurL, 1 PurQ and 2 PurS subunits.

It is found in the cytoplasm. The catalysed reaction is N(2)-formyl-N(1)-(5-phospho-beta-D-ribosyl)glycinamide + L-glutamine + ATP + H2O = 2-formamido-N(1)-(5-O-phospho-beta-D-ribosyl)acetamidine + L-glutamate + ADP + phosphate + H(+). It participates in purine metabolism; IMP biosynthesis via de novo pathway; 5-amino-1-(5-phospho-D-ribosyl)imidazole from N(2)-formyl-N(1)-(5-phospho-D-ribosyl)glycinamide: step 1/2. Part of the phosphoribosylformylglycinamidine synthase complex involved in the purines biosynthetic pathway. Catalyzes the ATP-dependent conversion of formylglycinamide ribonucleotide (FGAR) and glutamine to yield formylglycinamidine ribonucleotide (FGAM) and glutamate. The FGAM synthase complex is composed of three subunits. PurQ produces an ammonia molecule by converting glutamine to glutamate. PurL transfers the ammonia molecule to FGAR to form FGAM in an ATP-dependent manner. PurS interacts with PurQ and PurL and is thought to assist in the transfer of the ammonia molecule from PurQ to PurL. The chain is Phosphoribosylformylglycinamidine synthase subunit PurS from Methanothermobacter thermautotrophicus (strain ATCC 29096 / DSM 1053 / JCM 10044 / NBRC 100330 / Delta H) (Methanobacterium thermoautotrophicum).